Consider the following 90-residue polypeptide: Mucin-like protein 1 (90 aa).

Positions methionine 1–glutamine 20 are cleaved as a signal peptide. O-linked (GalNAc...) threonine glycans are attached at residues threonine 23, threonine 24, threonine 30, threonine 34, threonine 46, threonine 47, threonine 51, threonine 52, threonine 54, threonine 55, threonine 59, threonine 60, threonine 62, and threonine 63. Low complexity-rich tracts occupy residues alanine 25 to proline 36 and alanine 44 to threonine 68. The interval alanine 25–threonine 68 is disordered. Tandem repeats lie at residues threonine 46–alanine 53, threonine 54–alanine 61, and threonine 62–alanine 69. The 3 X 8 AA tandem repeat of T-T-A-A-[APS]-T-T-A stretch occupies residues threonine 46 to alanine 69. Serine 66 carries an O-linked (GalNAc...) serine glycan. Threonine 67 and threonine 68 each carry an O-linked (GalNAc...) threonine glycan.

Post-translationally, O-glycosylated. As to expression, expressed in mammary, salivary glands and prostate. Also detected in lung. Mainly expressed in cancer cell lines of breast origin. Highly expressed in lymph node-positive compared with node-negative tumors. Detected in all lymph node containing metastatic cells.

It localises to the secreted. Its subcellular location is the membrane. In terms of biological role, may play a role as marker for the diagnosis of metastatic breast cancer. The sequence is that of Mucin-like protein 1 (MUCL1) from Homo sapiens (Human).